The sequence spans 72 residues: UPF0150 protein jhp_0960 (72 aa).

It belongs to the UPF0150 family.

This Helicobacter pylori (strain J99 / ATCC 700824) (Campylobacter pylori J99) protein is UPF0150 protein jhp_0960.